The primary structure comprises 77 residues: Homeodomain-only protein (77 aa).

The segment at residues 7–65 (AALGVRLTEDQVKVLEENFTKVSKHPDETTLMLIAAECGLSEEQTAVWFRMRNAQWRKA) is a DNA-binding region (homeobox; degenerate).

The protein resides in the nucleus. The protein localises to the cytoplasm. In terms of biological role, atypical homeodomain protein which does not bind DNA and is required to modulate cardiac growth and development. May act via an interaction with SRF, leading to modulate the expression of SRF-dependent cardiac-specific genes and cardiac development. May act as a co-chaperone for HSPA1A and HSPA1B chaperone proteins and assist in chaperone-mediated protein refolding. This is Homeodomain-only protein (hopx) from Danio rerio (Zebrafish).